Here is a 350-residue protein sequence, read N- to C-terminus: Flap endonuclease 1 (350 aa).

Residues 1-101 (MGVNLRELIP…REVEERLRRK (101 aa)) form an N-domain region. Asp30, Asp83, Glu155, Glu157, Asp176, Asp178, and Asp239 together coordinate Mg(2+). The I-domain stretch occupies residues 119–261 (EARKYAMMAA…TALRLVKSLG (143 aa)). The interval 341–349 (RQSRLDMWF) is interaction with PCNA.

Belongs to the XPG/RAD2 endonuclease family. FEN1 subfamily. As to quaternary structure, interacts with PCNA. PCNA stimulates the nuclease activity without altering cleavage specificity. Mg(2+) serves as cofactor.

In terms of biological role, structure-specific nuclease with 5'-flap endonuclease and 5'-3' exonuclease activities involved in DNA replication and repair. During DNA replication, cleaves the 5'-overhanging flap structure that is generated by displacement synthesis when DNA polymerase encounters the 5'-end of a downstream Okazaki fragment. Binds the unpaired 3'-DNA end and kinks the DNA to facilitate 5' cleavage specificity. Cleaves one nucleotide into the double-stranded DNA from the junction in flap DNA, leaving a nick for ligation. Also involved in the base excision repair (BER) pathway. Acts as a genome stabilization factor that prevents flaps from equilibrating into structures that lead to duplications and deletions. Also possesses 5'-3' exonuclease activity on nicked or gapped double-stranded DNA. The sequence is that of Flap endonuclease 1 from Aeropyrum pernix (strain ATCC 700893 / DSM 11879 / JCM 9820 / NBRC 100138 / K1).